The following is a 160-amino-acid chain: SsrA-binding protein (160 aa).

A disordered region spans residues 133–160 (KKEHDKREDLKEREWQRDKERMMKNKGR).

The protein belongs to the SmpB family.

It localises to the cytoplasm. Its function is as follows. Required for rescue of stalled ribosomes mediated by trans-translation. Binds to transfer-messenger RNA (tmRNA), required for stable association of tmRNA with ribosomes. tmRNA and SmpB together mimic tRNA shape, replacing the anticodon stem-loop with SmpB. tmRNA is encoded by the ssrA gene; the 2 termini fold to resemble tRNA(Ala) and it encodes a 'tag peptide', a short internal open reading frame. During trans-translation Ala-aminoacylated tmRNA acts like a tRNA, entering the A-site of stalled ribosomes, displacing the stalled mRNA. The ribosome then switches to translate the ORF on the tmRNA; the nascent peptide is terminated with the 'tag peptide' encoded by the tmRNA and targeted for degradation. The ribosome is freed to recommence translation, which seems to be the essential function of trans-translation. The polypeptide is SsrA-binding protein (Tolumonas auensis (strain DSM 9187 / NBRC 110442 / TA 4)).